The sequence spans 370 residues: Aldo-keto reductase NECHADRAFT_45914 (370 aa).

Residue D78 coordinates NADP(+). The Proton donor role is filled by Y83. Residue H174 participates in substrate binding. NADP(+) contacts are provided by residues S204–S205, Q230, A259–R269, and S333–A341.

It belongs to the aldo/keto reductase family.

It participates in secondary metabolite biosynthesis. Its function is as follows. Aldo-keto reductase; part of the gene cluster that mediates the biosynthesis of sansalvamide, a cyclic pentadepsipeptide that shows promising results as potential anti-cancer drug. The nonribosmal peptide synthetase NRPS30 produces sansalvamide by incorporating successively one phenylalanine, one leucine, one alpha-hydroxyisocaproic acid (HICA), one valine and one leucine before sansalvamide is released from by cyclization by the terminal C domain of NRPS30. The HICA residue is probably provided by reduction of alpha-ketoisocaproate by the cluster-specific aldo-keto reductase (NECHADRAFT_45914). The polypeptide is Aldo-keto reductase NECHADRAFT_45914 (Fusarium vanettenii (strain ATCC MYA-4622 / CBS 123669 / FGSC 9596 / NRRL 45880 / 77-13-4) (Fusarium solani subsp. pisi)).